A 476-amino-acid chain; its full sequence is ATP sulfurylase 2 (476 aa).

The N-terminal 56 residues, 1–56 (MSLMIRSSYVSHITLFQPRNSKPSSFTNQISFLSSSNNNPFLNLVYKRNLTMQSVS), are a transit peptide targeting the chloroplast.

The protein belongs to the sulfate adenylyltransferase family. Homotetramer. In terms of tissue distribution, mostly expressed in leaves or cotyledons.

The protein localises to the plastid. It is found in the chloroplast. Its subcellular location is the cytoplasm. The catalysed reaction is sulfate + ATP + H(+) = adenosine 5'-phosphosulfate + diphosphate. It participates in sulfur metabolism; hydrogen sulfide biosynthesis; sulfite from sulfate: step 1/3. This Arabidopsis thaliana (Mouse-ear cress) protein is ATP sulfurylase 2 (APS2).